Consider the following 42-residue polypeptide: Photosystem I reaction center subunit IX (42 aa).

Residues Phe-7–Ile-27 traverse the membrane as a helical segment.

Belongs to the PsaJ family.

The protein localises to the cellular thylakoid membrane. May help in the organization of the PsaE and PsaF subunits. The chain is Photosystem I reaction center subunit IX from Rippkaea orientalis (strain PCC 8801 / RF-1) (Cyanothece sp. (strain PCC 8801)).